The chain runs to 139 residues: Acyl carrier protein 5, chloroplastic (139 aa).

A chloroplast-targeting transit peptide spans 1 to 54 (MATSFCSSISMQAPFSATTTRFCLNKQATIFNNEKTNNLSFSLRRLMPARLAVS). Residues 59-134 (QETVEKVSEI…QAAELIEELV (76 aa)) form the Carrier domain. Residue serine 94 is modified to O-(pantetheine 4'-phosphoryl)serine.

This sequence belongs to the acyl carrier protein (ACP) family. Post-translationally, 4'-phosphopantetheine is transferred from CoA to a specific serine of apo-ACP by acpS. This modification is essential for activity because fatty acids are bound in thioester linkage to the sulfhydryl of the prosthetic group.

Its subcellular location is the plastid. The protein localises to the chloroplast. Its function is as follows. Carrier of the growing fatty acid chain in fatty acid biosynthesis. The chain is Acyl carrier protein 5, chloroplastic (ACP5) from Arabidopsis thaliana (Mouse-ear cress).